The sequence spans 386 residues: S-adenosylmethionine synthase (386 aa).

His16 provides a ligand contact to ATP. Asp18 serves as a coordination point for Mg(2+). Residue Glu44 participates in K(+) binding. L-methionine is bound by residues Glu57 and Gln100. The flexible loop stretch occupies residues Gln100 to Arg110. Residues Asp165–Lys167, Asp240, Arg246–Lys247, Ala263, and Lys267 each bind ATP. L-methionine is bound at residue Asp240. Lys271 serves as a coordination point for L-methionine.

This sequence belongs to the AdoMet synthase family. In terms of assembly, homotetramer; dimer of dimers. The cofactor is Mg(2+). K(+) serves as cofactor.

It localises to the cytoplasm. The enzyme catalyses L-methionine + ATP + H2O = S-adenosyl-L-methionine + phosphate + diphosphate. It functions in the pathway amino-acid biosynthesis; S-adenosyl-L-methionine biosynthesis; S-adenosyl-L-methionine from L-methionine: step 1/1. Catalyzes the formation of S-adenosylmethionine (AdoMet) from methionine and ATP. The overall synthetic reaction is composed of two sequential steps, AdoMet formation and the subsequent tripolyphosphate hydrolysis which occurs prior to release of AdoMet from the enzyme. This is S-adenosylmethionine synthase from Francisella tularensis subsp. tularensis (strain FSC 198).